The primary structure comprises 489 residues: Tandem C2 domains nuclear protein (489 aa).

Phosphoserine is present on residues S82, S155, S167, S173, and S210. The segment at 189–214 is disordered; sequence DSFSSVPSSSSSRKNSQGSNRSLDTI. Over residues 191–210 the composition is skewed to low complexity; that stretch reads FSSVPSSSSSRKNSQGSNRS. Phosphothreonine is present on residues T213 and T215. Position 217 is a phosphoserine (S217). 2 C2 domains span residues 222–341 and 343–470; these read DLGR…SLEI and APSK…NQWK. The short motif at 446-448 is the Nuclear localization signal element; that stretch reads RRK.

The protein localises to the nucleus. The sequence is that of Tandem C2 domains nuclear protein (Tc2n) from Mus musculus (Mouse).